A 305-amino-acid polypeptide reads, in one-letter code: Probable lipid kinase YegS-like (305 aa).

The DAGKc domain occupies 1–129 (MTQRRAMLIL…VDLGEVGGKL (129 aa)). ATP contacts are provided by residues T39, 65 to 71 (GDGTLRD), and T92. Residues L210, D213, and L215 each contribute to the Mg(2+) site. Catalysis depends on E268, which acts as the Proton acceptor.

This sequence belongs to the diacylglycerol/lipid kinase family. YegS lipid kinase subfamily. Mg(2+) serves as cofactor. The cofactor is Ca(2+).

It is found in the cytoplasm. In terms of biological role, probably phosphorylates lipids; the in vivo substrate is unknown. In Pseudomonas savastanoi pv. phaseolicola (strain 1448A / Race 6) (Pseudomonas syringae pv. phaseolicola (strain 1448A / Race 6)), this protein is Probable lipid kinase YegS-like.